The following is a 386-amino-acid chain: MTDDPISPSMALLPAGLRDLLPPDAEHEARVVGRLMKEFTRHGYERVKPPLIEFEEGLLSGPGRALAKQTFRLMDPISQQMMGVRSDMTLQVARIAATRMPKSPRPLRLSYAGQVLRVKGTQLRPERQFGQVGVELIGGMQVEADAEVVLLAASALAAVGADGVTIDLTVPTLVPTVCRALNLSEAETRCVRDALDRRDTAAVAAIGGPAGDLLVRIMAAGGPAAAAVAALSAVDLPTVAEPDRWRLTEVVKLLTAAAPHLNLTIDPVEQRGFEYQTGLSFTIFARGVTGELGRGGRYRSGGDGEPATGFTLYTDTVLRAIPGPPPPRRILLPHGTPYAEGARLRDEGWQTVAVLEPGADLSAEARRQGCGHLWAGGRIQEIQDRP.

This sequence belongs to the class-II aminoacyl-tRNA synthetase family. HisZ subfamily. In terms of assembly, heteromultimer composed of HisG and HisZ subunits.

The protein resides in the cytoplasm. It functions in the pathway amino-acid biosynthesis; L-histidine biosynthesis; L-histidine from 5-phospho-alpha-D-ribose 1-diphosphate: step 1/9. Functionally, required for the first step of histidine biosynthesis. May allow the feedback regulation of ATP phosphoribosyltransferase activity by histidine. The chain is ATP phosphoribosyltransferase regulatory subunit from Rhodospirillum centenum (strain ATCC 51521 / SW).